We begin with the raw amino-acid sequence, 410 residues long: Arginine biosynthesis bifunctional protein ArgJ (410 aa).

Positions 160, 186, 197, 283, 405, and 410 each coordinate substrate. The active-site Nucleophile is T197.

The protein belongs to the ArgJ family. In terms of assembly, heterotetramer of two alpha and two beta chains.

It is found in the cytoplasm. The enzyme catalyses N(2)-acetyl-L-ornithine + L-glutamate = N-acetyl-L-glutamate + L-ornithine. It catalyses the reaction L-glutamate + acetyl-CoA = N-acetyl-L-glutamate + CoA + H(+). It functions in the pathway amino-acid biosynthesis; L-arginine biosynthesis; L-ornithine and N-acetyl-L-glutamate from L-glutamate and N(2)-acetyl-L-ornithine (cyclic): step 1/1. The protein operates within amino-acid biosynthesis; L-arginine biosynthesis; N(2)-acetyl-L-ornithine from L-glutamate: step 1/4. With respect to regulation, competitively inhibited by L-ornithine. Functionally, catalyzes two activities which are involved in the cyclic version of arginine biosynthesis: the synthesis of N-acetylglutamate from glutamate and acetyl-CoA as the acetyl donor, and of ornithine by transacetylation between N(2)-acetylornithine and glutamate. The polypeptide is Arginine biosynthesis bifunctional protein ArgJ (Geobacillus stearothermophilus (Bacillus stearothermophilus)).